The chain runs to 369 residues: Peptide chain release factor 2 (369 aa).

Glutamine 251 is subject to N5-methylglutamine.

Belongs to the prokaryotic/mitochondrial release factor family. Methylated by PrmC. Methylation increases the termination efficiency of RF2.

The protein localises to the cytoplasm. In terms of biological role, peptide chain release factor 2 directs the termination of translation in response to the peptide chain termination codons UGA and UAA. In Campylobacter fetus subsp. fetus (strain 82-40), this protein is Peptide chain release factor 2.